The following is a 431-amino-acid chain: tRNA-2-methylthio-N(6)-dimethylallyladenosine synthase (431 aa).

In terms of domain architecture, MTTase N-terminal spans 4 to 120; the sequence is RAVYIKTFGC…IENIIENQVS (117 aa). [4Fe-4S] cluster is bound by residues Cys13, Cys49, Cys83, Cys154, Cys158, and Cys161. In terms of domain architecture, Radical SAM core spans 140–367; the sequence is RKDCVKAWVN…LKLQDEITER (228 aa). In terms of domain architecture, TRAM spans 370 to 430; the sequence is KRLEGKIQEV…RHSLEGDIIS (61 aa).

Belongs to the methylthiotransferase family. MiaB subfamily. In terms of assembly, monomer. Requires [4Fe-4S] cluster as cofactor.

Its subcellular location is the cytoplasm. It carries out the reaction N(6)-dimethylallyladenosine(37) in tRNA + (sulfur carrier)-SH + AH2 + 2 S-adenosyl-L-methionine = 2-methylsulfanyl-N(6)-dimethylallyladenosine(37) in tRNA + (sulfur carrier)-H + 5'-deoxyadenosine + L-methionine + A + S-adenosyl-L-homocysteine + 2 H(+). Its function is as follows. Catalyzes the methylthiolation of N6-(dimethylallyl)adenosine (i(6)A), leading to the formation of 2-methylthio-N6-(dimethylallyl)adenosine (ms(2)i(6)A) at position 37 in tRNAs that read codons beginning with uridine. This is tRNA-2-methylthio-N(6)-dimethylallyladenosine synthase from Thermodesulfovibrio yellowstonii (strain ATCC 51303 / DSM 11347 / YP87).